A 359-amino-acid polypeptide reads, in one-letter code: Type-1 angiotensin II receptor A (359 aa).

Over M1–S25 the chain is Extracellular. N4 carries an N-linked (GlcNAc...) asparagine glycan. Angiotensin II is bound by residues Q15 and D17. Disulfide bonds link C18–C274 and C101–C180. The helical transmembrane segment at Y26–F55 threads the bilayer. At Y56–T61 the chain is on the cytoplasmic side. The helical transmembrane segment at V62–A89 threads the bilayer. At M90 to N98 the chain is on the extracellular side. The helical transmembrane segment at H99–D125 threads the bilayer. Residues R126–T141 lie on the Cytoplasmic side of the membrane. The chain crosses the membrane as a helical span at residues M142–I165. Over H166 to T190 the chain is Extracellular. R167 serves as a coordination point for angiotensin II. N-linked (GlcNAc...) asparagine glycosylation occurs at N176. F182, H183, and Y184 together coordinate angiotensin II. The N-linked (GlcNAc...) asparagine glycan is linked to N188. A helical membrane pass occupies residues L191 to T216. An angiotensin II-binding site is contributed by K199. Topologically, residues L217–F239 are cytoplasmic. Residues R240–L268 traverse the membrane as a helical segment. The Extracellular portion of the chain corresponds to G269–D278. A helical transmembrane segment spans residues I279–F304. Residues L305 to E359 lie on the Cytoplasmic side of the membrane. Residues S335–S347 show a composition bias toward polar residues. The tract at residues S335–E359 is disordered. C355 is lipidated: S-palmitoyl cysteine.

It belongs to the G-protein coupled receptor 1 family. Interacts with MAS1. Interacts with ARRB1. Interacts with FLNA (via filamin repeat 21); increases PKA-mediated phosphorylation of FLNA. Post-translationally, C-terminal Ser or Thr residues may be phosphorylated.

Its subcellular location is the cell membrane. Functionally, receptor for angiotensin II, a vasoconstricting peptide, which acts as a key regulator of blood pressure and sodium retention by the kidney. The activated receptor in turn couples to G-alpha proteins G(q) (GNAQ, GNA11, GNA14 or GNA15) and thus activates phospholipase C and increases the cytosolic Ca(2+) concentrations, which in turn triggers cellular responses such as stimulation of protein kinase C. The chain is Type-1 angiotensin II receptor A (Agtr1a) from Mus musculus (Mouse).